The following is a 493-amino-acid chain: EGF-containing fibulin-like extracellular matrix protein 1 (493 aa).

Positions 1–17 (MLQTVFLTMLTLALVKS) are cleaved as a signal peptide. The EGF-like 1; atypical domain occupies 26–71 (YTQCTDGYEWDPVRQQCKDIDECDIVPDACKGGMKCVNHYGGYLCL). In terms of domain architecture, EGF-like 2; calcium-binding spans 173-213 (DIDECTSGTHNCRLDQVCINLRGSFTCHCLPGYQKRGEQCV). Cystine bridges form between Cys-177/Cys-190, Cys-184/Cys-199, Cys-201/Cys-212, Cys-218/Cys-228, Cys-224/Cys-237, Cys-239/Cys-252, Cys-258/Cys-268, Cys-264/Cys-277, Cys-279/Cys-292, Cys-298/Cys-309, Cys-305/Cys-318, Cys-320/Cys-332, Cys-338/Cys-350, Cys-344/Cys-359, and Cys-365/Cys-377. The 40-residue stretch at 214–253 (DIDECSVPPYCHQGCVNTPGSFYCQCNPGFQLAANNYTCV) folds into the EGF-like 3; calcium-binding domain. N-linked (GlcNAc...) asparagine glycosylation is present at Asn-249. In terms of domain architecture, EGF-like 4; calcium-binding spans 254-293 (DINECDASNQCAQQCYNILGSFICQCNQGYELSSDRLNCE). Positions 259–493 (DASNQCAQQC…LTIIVGPFSF (235 aa)) are mediates interaction with TIMP3. The EGF-like 5; calcium-binding domain maps to 294 to 333 (DIDECRTSSYLCQYQCVNEPGKFSCMCPQGYQVVRSRTCQ). The EGF-like 6; calcium-binding domain maps to 334–378 (DINECETTNECREDEMCWNYHGGFRCYPQNPCQDPYVLTSENRCV).

It belongs to the fibulin family. Interacts with ECM1. Interacts with TIMP3. Expressed by olfactory ensheathing cells (at protein level). Detected in lung, intestine and kidney.

The protein resides in the secreted. Its subcellular location is the extracellular space. It is found in the extracellular matrix. Functionally, binds EGFR, the EGF receptor, inducing EGFR autophosphorylation and the activation of downstream signaling pathways. May play a role in cell adhesion and migration. May function as a negative regulator of chondrocyte differentiation. In the olfactory epithelium, it may regulate glial cell migration, differentiation and the ability of glial cells to support neuronal neurite outgrowth. In Rattus norvegicus (Rat), this protein is EGF-containing fibulin-like extracellular matrix protein 1 (Efemp1).